Consider the following 163-residue polypeptide: MASTYSFDIVSDFDRQELVNAVDQVIRDLKSRYDLKDTQTTVELGEEKITIGTDSEFTLESVHNILREKAAKRNLSQKIFDFGKVESASGNRVRQEITLKKGISQDIAKQISKLIRDEFKKVQASIQGDAVRVSAKAKDDLQIVIQRLKQEDYPVALQFTNYR.

The protein belongs to the YajQ family.

Nucleotide-binding protein. The protein is Nucleotide-binding protein all4662 of Nostoc sp. (strain PCC 7120 / SAG 25.82 / UTEX 2576).